The sequence spans 700 residues: DNA topoisomerase 1 (700 aa).

The Toprim domain maps to 3–114 (KNLIIVESPA…TLPRIVFHEI (112 aa)). E9 and D83 together coordinate Mg(2+). Residues 130–553 (NMHSVNAQQT…EFYYPFMRKI (424 aa)) form the Topo IA-type catalytic domain. The tract at residues 164 to 169 (SAGRVQ) is interaction with DNA. Y298 acts as the O-(5'-phospho-DNA)-tyrosine intermediate in catalysis. 3 consecutive C4-type zinc fingers follow at residues 573–599 (CPDC…FPKC), 629–656 (CPSC…YPKC), and 669–692 (CEEC…CLKC).

This sequence belongs to the type IA topoisomerase family. As to quaternary structure, monomer. Mg(2+) is required as a cofactor.

It catalyses the reaction ATP-independent breakage of single-stranded DNA, followed by passage and rejoining.. Its function is as follows. Releases the supercoiling and torsional tension of DNA, which is introduced during the DNA replication and transcription, by transiently cleaving and rejoining one strand of the DNA duplex. Introduces a single-strand break via transesterification at a target site in duplex DNA. The scissile phosphodiester is attacked by the catalytic tyrosine of the enzyme, resulting in the formation of a DNA-(5'-phosphotyrosyl)-enzyme intermediate and the expulsion of a 3'-OH DNA strand. The free DNA strand then undergoes passage around the unbroken strand, thus removing DNA supercoils. Finally, in the religation step, the DNA 3'-OH attacks the covalent intermediate to expel the active-site tyrosine and restore the DNA phosphodiester backbone. The chain is DNA topoisomerase 1 from Campylobacter jejuni subsp. jejuni serotype O:2 (strain ATCC 700819 / NCTC 11168).